A 297-amino-acid chain; its full sequence is MTTEVRADLYPSRGAAEMTTPRQDPVIWSAPGAPGPVAAKDLQGYEHDGFLTVDQLIAPDEVAVYQAELNRLISDPAVRADERSIVEKQSQNVRSVFEVHRISEVFAGLVRDERVVGRARQILGSDVYVHQSRINVKPGFGATGFYWHSDFETWHAEDGLPNMRTVSVSIALTENFDTNGGLMIMPGSHKTFLGCAGETPKDNYKKSLQMQDAGTPSDEALTKMADRHGIRLFTGRAGSATWFDCNAMHGSGDNITPYARSNVFIVFNSVENAAQEPFAAPIRRPEFIGARDFTPVK.

L-ectoine is bound at residue Gln131. Lys137 provides a ligand contact to 2-oxoglutarate. Residues His148, Asp150, and His249 each contribute to the Fe cation site.

Belongs to the PhyH family. EctD subfamily. In terms of assembly, homodimer. Fe(2+) is required as a cofactor.

The catalysed reaction is L-ectoine + 2-oxoglutarate + O2 = 5-hydroxyectoine + succinate + CO2. Functionally, involved in the biosynthesis of 5-hydroxyectoine, called compatible solute, which helps organisms to survive extreme osmotic stress by acting as a highly soluble organic osmolyte. Catalyzes the 2-oxoglutarate-dependent selective hydroxylation of L-ectoine to yield (4S,5S)-5-hydroxyectoine. This chain is Ectoine dioxygenase, found in Streptomyces anulatus (Streptomyces chrysomallus).